A 347-amino-acid polypeptide reads, in one-letter code: Spermatogenesis associated 6-like protein (347 aa).

Residues 115-199 (SKSHGQRVQA…ENNLEHCSKK (85 aa)) form a disordered region. Residues 116–125 (KSHGQRVQAT) are compositionally biased toward polar residues. Residues 153–166 (LHLHRPTQRNHGKS) are compositionally biased toward basic residues. Basic and acidic residues predominate over residues 170–183 (PGERKPPFVVRHVD). Phosphoserine occurs at positions 218 and 221. A disordered region spans residues 234–285 (ERIVLKSQPPPPVDSSESRKPSLSHQGDASLHTETSVTTSQLSRPPSPLNQP). Residues 254–277 (PSLSHQGDASLHTETSVTTSQLSR) are compositionally biased toward polar residues.

This sequence belongs to the SPATA6 family.

The protein is Spermatogenesis associated 6-like protein (Spata6l) of Mus musculus (Mouse).